A 165-amino-acid chain; its full sequence is Cyclic pyranopterin monophosphate synthase (165 aa).

Residues 83–85 (FCH) and 120–121 (ME) contribute to the substrate site. The active site involves Asp135.

This sequence belongs to the MoaC family. As to quaternary structure, homohexamer; trimer of dimers.

It catalyses the reaction (8S)-3',8-cyclo-7,8-dihydroguanosine 5'-triphosphate = cyclic pyranopterin phosphate + diphosphate. Its pathway is cofactor biosynthesis; molybdopterin biosynthesis. Functionally, catalyzes the conversion of (8S)-3',8-cyclo-7,8-dihydroguanosine 5'-triphosphate to cyclic pyranopterin monophosphate (cPMP). The chain is Cyclic pyranopterin monophosphate synthase from Xanthomonas oryzae pv. oryzae (strain MAFF 311018).